The sequence spans 1037 residues: Presequence protease, mitochondrial (1037 aa).

The N-terminal 28 residues, 1-28 (MWRCGGRQGLCVLRRLSGGHAHHRAWRW), are a transit peptide targeting the mitochondrion. His104 provides a ligand contact to Zn(2+). The active-site Proton acceptor is the Glu107. His108 contacts Zn(2+). Cys119 and Cys556 are disulfide-bonded. The active site involves Glu180. Residue Glu205 coordinates Zn(2+). Residue Lys759 is modified to N6-acetyllysine. Lys770 carries the N6-acetyllysine; alternate modification. Position 770 is an N6-succinyllysine; alternate (Lys770). Over residues 804-814 (GRSKKERRPVR) the composition is skewed to basic residues. A disordered region spans residues 804–834 (GRSKKERRPVRPHTVEKPVPSSSGGDAHVPH). Lys849 carries the N6-succinyllysine modification. N6-acetyllysine is present on Lys884. At Lys946 the chain carries N6-succinyllysine.

It belongs to the peptidase M16 family. PreP subfamily. As to quaternary structure, monomer and homodimer; homodimerization is induced by binding of the substrate. Zn(2+) is required as a cofactor. In terms of processing, a disulfide bond locks the enzyme in the closed conformation preventing substrate entry into the catalytic chamber. As to expression, widely expressed. Expressed at higher level in muscle and heart compared to brain, pancreas, liver, lung and placenta.

The protein localises to the mitochondrion. The protein resides in the mitochondrion matrix. Mainly exists in a closed and catalytically competent conformation but a closed-to-open switch allows substrate entry into the catalytic chamber. Substrate binding induces closure and dimerization. A disulfide bond may lock the enzyme in a closed conformation preventing substrate entry into the catalytic chamber, participating in redox regulation of the enzyme. Inhibited by metal-chelating agents. Inhibited by nickel and zinc excess, and slightly activated by manganese. In terms of biological role, metalloendopeptidase of the mitochondrial matrix that functions in peptide cleavage and degradation rather than in protein processing. Has an ATP-independent activity. Specifically cleaves peptides in the range of 5 to 65 residues. Shows a preference for cleavage after small polar residues and before basic residues, but without any positional preference. Degrades the transit peptides of mitochondrial proteins after their cleavage. Also degrades other unstructured peptides. It is also able to degrade amyloid-beta protein 40, one of the peptides produced by APP processing, when it accumulates in mitochondrion. It is a highly efficient protease, at least toward amyloid-beta protein 40. Cleaves that peptide at a specific position and is probably not processive, releasing digested peptides intermediates that can be further cleaved subsequently. It is also able to degrade amyloid-beta protein 42. This is Presequence protease, mitochondrial from Homo sapiens (Human).